The following is a 206-amino-acid chain: Type III pantothenate kinase (206 aa).

5-12 lines the ATP pocket; the sequence is DIGNTFLH. Substrate contacts are provided by residues tyrosine 69 and 73-76; that span reads GVDR. Catalysis depends on aspartate 75, which acts as the Proton acceptor. Position 90 (aspartate 90) interacts with K(+). Serine 93 contacts ATP. Threonine 145 is a binding site for substrate.

Belongs to the type III pantothenate kinase family. Homodimer. The cofactor is NH4(+). Requires K(+) as cofactor.

The protein localises to the cytoplasm. The enzyme catalyses (R)-pantothenate + ATP = (R)-4'-phosphopantothenate + ADP + H(+). Its pathway is cofactor biosynthesis; coenzyme A biosynthesis; CoA from (R)-pantothenate: step 1/5. In terms of biological role, catalyzes the phosphorylation of pantothenate (Pan), the first step in CoA biosynthesis. The sequence is that of Type III pantothenate kinase from Helicobacter hepaticus (strain ATCC 51449 / 3B1).